The chain runs to 65 residues: Trypsin inhibitor 1 (65 aa).

3 disulfides stabilise this stretch: Cys39–Cys56, Cys46–Cys58, and Cys52–Cys64.

Belongs to the protease inhibitor I7 (squash-type serine protease inhibitor) family.

It is found in the secreted. In terms of biological role, inhibits trypsin. The protein is Trypsin inhibitor 1 of Trichosanthes kirilowii (Chinese snake gourd).